A 328-amino-acid polypeptide reads, in one-letter code: Biotin synthase (328 aa).

In terms of domain architecture, Radical SAM core spans 48–275; sequence NRIQLSKLLN…KSHVRLTAGR (228 aa). The [4Fe-4S] cluster site is built by Cys-63, Cys-67, and Cys-70. Positions 107, 138, 198, and 270 each coordinate [2Fe-2S] cluster.

Belongs to the radical SAM superfamily. Biotin synthase family. Homodimer. [4Fe-4S] cluster is required as a cofactor. Requires [2Fe-2S] cluster as cofactor.

It carries out the reaction (4R,5S)-dethiobiotin + (sulfur carrier)-SH + 2 reduced [2Fe-2S]-[ferredoxin] + 2 S-adenosyl-L-methionine = (sulfur carrier)-H + biotin + 2 5'-deoxyadenosine + 2 L-methionine + 2 oxidized [2Fe-2S]-[ferredoxin]. The protein operates within cofactor biosynthesis; biotin biosynthesis; biotin from 7,8-diaminononanoate: step 2/2. Functionally, catalyzes the conversion of dethiobiotin (DTB) to biotin by the insertion of a sulfur atom into dethiobiotin via a radical-based mechanism. The sequence is that of Biotin synthase from Brucella ovis (strain ATCC 25840 / 63/290 / NCTC 10512).